The chain runs to 334 residues: Transcription initiation factor IIB (334 aa).

The TFIIB-type zinc finger occupies 34-65 (TETVCPECGGRQLVHDYERAELVCQSCGLVID). Zn(2+) contacts are provided by cysteine 38, cysteine 41, cysteine 57, and cysteine 60. A run of 2 repeats spans residues 151–234 (SELD…SREL) and 245–326 (DYVP…ELAE).

Belongs to the TFIIB family.

Stabilizes TBP binding to an archaeal box-A promoter. Also responsible for recruiting RNA polymerase II to the pre-initiation complex (DNA-TBP-TFIIB). The chain is Transcription initiation factor IIB from Methanoregula boonei (strain DSM 21154 / JCM 14090 / 6A8).